A 274-amino-acid polypeptide reads, in one-letter code: Dermonecrotic toxin SdSicTox-betaIIB1biii (274 aa).

His5 is an active-site residue. 2 residues coordinate Mg(2+): Glu25 and Asp27. Catalysis depends on His41, which acts as the Nucleophile. Intrachain disulfides connect Cys45/Cys51 and Cys47/Cys190. Asp85 lines the Mg(2+) pocket.

It belongs to the arthropod phospholipase D family. Class II subfamily. It depends on Mg(2+) as a cofactor. Expressed by the venom gland.

Its subcellular location is the secreted. It carries out the reaction an N-(acyl)-sphingosylphosphocholine = an N-(acyl)-sphingosyl-1,3-cyclic phosphate + choline. It catalyses the reaction an N-(acyl)-sphingosylphosphoethanolamine = an N-(acyl)-sphingosyl-1,3-cyclic phosphate + ethanolamine. The catalysed reaction is a 1-acyl-sn-glycero-3-phosphocholine = a 1-acyl-sn-glycero-2,3-cyclic phosphate + choline. The enzyme catalyses a 1-acyl-sn-glycero-3-phosphoethanolamine = a 1-acyl-sn-glycero-2,3-cyclic phosphate + ethanolamine. Its function is as follows. Dermonecrotic toxins cleave the phosphodiester linkage between the phosphate and headgroup of certain phospholipids (sphingolipid and lysolipid substrates), forming an alcohol (often choline) and a cyclic phosphate. This toxin acts on sphingomyelin (SM). It may also act on ceramide phosphoethanolamine (CPE), lysophosphatidylcholine (LPC) and lysophosphatidylethanolamine (LPE), but not on lysophosphatidylserine (LPS), and lysophosphatidylglycerol (LPG). It acts by transphosphatidylation, releasing exclusively cyclic phosphate products as second products. Induces dermonecrosis, hemolysis, increased vascular permeability, edema, inflammatory response, and platelet aggregation. The sequence is that of Dermonecrotic toxin SdSicTox-betaIIB1biii from Sicarius cf. damarensis (strain GJB-2008) (Six-eyed sand spider).